A 295-amino-acid chain; its full sequence is Spermatogenesis-associated protein 4 (295 aa).

The interval 1-34 (MAAAGQAEECLPLPAAESSKTSLPTPPAVPAGKK) is disordered. Positions 48–154 (SRLSRSVLRW…QEIYTLLTHQ (107 aa)) constitute a Calponin-homology (CH) domain. Residues 251-295 (KRRYKSRGSKEKAAQPLSKSDNDGNARKEIHVKQSGNPCENTENL) are disordered. Basic and acidic residues predominate over residues 270–282 (SDNDGNARKEIHV). The span at 284 to 295 (QSGNPCENTENL) shows a compositional bias: polar residues.

As to expression, testis.

The protein localises to the nucleus. Functionally, may play a role in apoptosis regulation. This is Spermatogenesis-associated protein 4 (Spata4) from Mus musculus (Mouse).